Reading from the N-terminus, the 460-residue chain is Proline--tRNA ligase (460 aa).

It belongs to the class-II aminoacyl-tRNA synthetase family. ProS type 3 subfamily. In terms of assembly, homodimer.

The protein localises to the cytoplasm. It catalyses the reaction tRNA(Pro) + L-proline + ATP = L-prolyl-tRNA(Pro) + AMP + diphosphate. Its function is as follows. Catalyzes the attachment of proline to tRNA(Pro) in a two-step reaction: proline is first activated by ATP to form Pro-AMP and then transferred to the acceptor end of tRNA(Pro). This Methanococcus maripaludis (strain C5 / ATCC BAA-1333) protein is Proline--tRNA ligase.